The primary structure comprises 144 residues: Prefoldin subunit alpha (144 aa).

Belongs to the prefoldin alpha subunit family. Heterohexamer of two alpha and four beta subunits.

It localises to the cytoplasm. Functionally, molecular chaperone capable of stabilizing a range of proteins. Seems to fulfill an ATP-independent, HSP70-like function in archaeal de novo protein folding. The polypeptide is Prefoldin subunit alpha (Methanococcus aeolicus (strain ATCC BAA-1280 / DSM 17508 / OCM 812 / Nankai-3)).